Here is a 552-residue protein sequence, read N- to C-terminus: Urocanate hydratase (552 aa).

Residues 48-49, Gln126, 172-174, Asp192, 238-239, 259-263, 268-269, and Tyr317 each bind NAD(+); these read GG, GMG, NA, QTSAH, and YL. Cys405 is a catalytic residue. Gly487 serves as a coordination point for NAD(+).

The protein belongs to the urocanase family. NAD(+) serves as cofactor.

The protein localises to the cytoplasm. It catalyses the reaction 4-imidazolone-5-propanoate = trans-urocanate + H2O. Its pathway is amino-acid degradation; L-histidine degradation into L-glutamate; N-formimidoyl-L-glutamate from L-histidine: step 2/3. Functionally, catalyzes the conversion of urocanate to 4-imidazolone-5-propionate. This is Urocanate hydratase from Streptomyces griseus subsp. griseus (strain JCM 4626 / CBS 651.72 / NBRC 13350 / KCC S-0626 / ISP 5235).